Consider the following 77-residue polypeptide: MNQIHLKCHSDKICPKGYFGLNADPYDCTAYYLCPHKVQMFCELNHEFDLDSASCKPIVYDHTGSGCTARMYRNLLL.

It localises to the host nucleus. Its subcellular location is the virion. Its function is as follows. Plays a role in primary oral infection of the host. This is Protein AC145 from Autographa californica nuclear polyhedrosis virus (AcMNPV).